The primary structure comprises 1084 residues: Probable hemoglobin and hemoglobin-haptoglobin-binding protein 3 (1084 aa).

An N-terminal signal peptide occupies residues 1-24 (MTNFKFSLLACSIAFALNASTVYA). 12 tandem repeats follow at residues 26 to 29 (QPTN), 30 to 33 (QPTN), 34 to 37 (QPTN), 38 to 41 (QPTN), 42 to 45 (QPTN), 46 to 49 (QPTN), 50 to 53 (QPTN), 54 to 57 (QPTN), 58 to 61 (QPTN), 62 to 65 (QPTN), 66 to 69 (QPTN), and 70 to 73 (QPTN). Positions 26–73 (QPTNQPTNQPTNQPTNQPTNQPTNQPTNQPTNQPTNQPTNQPTNQPTN) are 12 X 4 AA tandem repeats of Q-P-T-N. The span at 26–75 (QPTNQPTNQPTNQPTNQPTNQPTNQPTNQPTNQPTNQPTNQPTNQPTNQN) shows a compositional bias: low complexity. The interval 26 to 77 (QPTNQPTNQPTNQPTNQPTNQPTNQPTNQPTNQPTNQPTNQPTNQPTNQNSN) is disordered. A TonB box motif is present at residues 83 to 90 (EQINVSGS). The 126-residue stretch at 95–220 (NIKEKKVGET…LGGSVIFETK (126 aa)) folds into the TBDR plug domain. In terms of domain architecture, TBDR beta-barrel spans 228–1084 (DKDYYLSYKR…NYRMSVQFEF (857 aa)). The TonB C-terminal box motif lies at 1067-1084 (NRFYAPGRNYRMSVQFEF).

The protein belongs to the TonB-dependent receptor family. Hemoglobin/haptoglobin binding protein subfamily.

The protein resides in the cell outer membrane. Its function is as follows. Acts as a receptor for hemoglobin or the hemoglobin/haptoglobin complex of the human host and is required for heme uptake. The chain is Probable hemoglobin and hemoglobin-haptoglobin-binding protein 3 from Haemophilus influenzae (strain ATCC 51907 / DSM 11121 / KW20 / Rd).